A 415-amino-acid polypeptide reads, in one-letter code: Histidine--tRNA ligase (415 aa).

Belongs to the class-II aminoacyl-tRNA synthetase family. In terms of assembly, homodimer.

The protein localises to the cytoplasm. The enzyme catalyses tRNA(His) + L-histidine + ATP = L-histidyl-tRNA(His) + AMP + diphosphate + H(+). The polypeptide is Histidine--tRNA ligase (Clostridium botulinum (strain Loch Maree / Type A3)).